The chain runs to 236 residues: Ribose-5-phosphate isomerase A (236 aa).

Substrate contacts are provided by residues 33 to 36 (TGST), 90 to 93 (DGAD), and 103 to 106 (KGGG). The Proton acceptor role is filled by E112. Substrate is bound at residue K130.

This sequence belongs to the ribose 5-phosphate isomerase family. Homodimer.

The enzyme catalyses aldehydo-D-ribose 5-phosphate = D-ribulose 5-phosphate. Its pathway is carbohydrate degradation; pentose phosphate pathway; D-ribose 5-phosphate from D-ribulose 5-phosphate (non-oxidative stage): step 1/1. Functionally, catalyzes the reversible conversion of ribose-5-phosphate to ribulose 5-phosphate. This chain is Ribose-5-phosphate isomerase A, found in Nostoc sp. (strain PCC 7120 / SAG 25.82 / UTEX 2576).